Reading from the N-terminus, the 72-residue chain is Conotoxin LiC53 (72 aa).

Positions 1 to 23 are cleaved as a signal peptide; that stretch reads MEKLTSLLLVAALLMLTQTLIQG. Positions 24–41 are excised as a propeptide; sequence GGEDRPNKKFLQKIKSTA. Cystine bridges form between cysteine 45/cysteine 59, cysteine 52/cysteine 63, and cysteine 58/cysteine 68.

It belongs to the conotoxin O2 superfamily. Expressed by the venom duct.

Its subcellular location is the secreted. The sequence is that of Conotoxin LiC53 from Conus lividus (Livid cone).